The primary structure comprises 351 residues: uncharacterized protein (351 aa).

Residues Asp-215, Asp-226, His-290, Glu-319, and Glu-333 each coordinate Mn(2+).

It belongs to the peptidase M24B family. The cofactor is Mn(2+).

This is an uncharacterized protein from Staphylococcus aureus (strain bovine RF122 / ET3-1).